Consider the following 210-residue polypeptide: Proteasome subunit beta (210 aa).

The propeptide at 1-9 (MDNDKHLKG) is removed in mature form; by autocatalysis. The Nucleophile role is filled by Thr10.

The protein belongs to the peptidase T1B family. In terms of assembly, the 20S proteasome core is composed of 14 alpha and 14 beta subunits that assemble into four stacked heptameric rings, resulting in a barrel-shaped structure. The two inner rings, each composed of seven catalytic beta subunits, are sandwiched by two outer rings, each composed of seven alpha subunits. The catalytic chamber with the active sites is on the inside of the barrel. Has a gated structure, the ends of the cylinder being occluded by the N-termini of the alpha-subunits. Is capped at one or both ends by the proteasome regulatory ATPase, PAN.

It is found in the cytoplasm. It carries out the reaction Cleavage of peptide bonds with very broad specificity.. Its activity is regulated as follows. The formation of the proteasomal ATPase PAN-20S proteasome complex, via the docking of the C-termini of PAN into the intersubunit pockets in the alpha-rings, triggers opening of the gate for substrate entry. Interconversion between the open-gate and close-gate conformations leads to a dynamic regulation of the 20S proteasome proteolysis activity. Component of the proteasome core, a large protease complex with broad specificity involved in protein degradation. The sequence is that of Proteasome subunit beta from Methanococcoides burtonii (strain DSM 6242 / NBRC 107633 / OCM 468 / ACE-M).